A 352-amino-acid polypeptide reads, in one-letter code: Quinolinate synthase (352 aa).

Iminosuccinate-binding residues include His-48 and Ser-69. Cys-114 provides a ligand contact to [4Fe-4S] cluster. Iminosuccinate is bound by residues 140 to 142 (YAN) and Ser-157. Residue Cys-201 coordinates [4Fe-4S] cluster. Residues 227–229 (HPE) and Thr-244 contribute to the iminosuccinate site. Residue Cys-298 participates in [4Fe-4S] cluster binding.

It belongs to the quinolinate synthase family. Type 1 subfamily. [4Fe-4S] cluster serves as cofactor.

It localises to the cytoplasm. The enzyme catalyses iminosuccinate + dihydroxyacetone phosphate = quinolinate + phosphate + 2 H2O + H(+). It functions in the pathway cofactor biosynthesis; NAD(+) biosynthesis; quinolinate from iminoaspartate: step 1/1. In terms of biological role, catalyzes the condensation of iminoaspartate with dihydroxyacetone phosphate to form quinolinate. This chain is Quinolinate synthase, found in Pseudomonas syringae pv. syringae (strain B728a).